Reading from the N-terminus, the 101-residue chain is Acylphosphatase-1 (101 aa).

Residue serine 2 is modified to N-acetylserine. Serine 2 carries the N-acetylalanine modification. Residues 11–101 (SVDYEIFGKV…LDYTDFQIVK (91 aa)) form the Acylphosphatase-like domain. Active-site residues include arginine 26 and asparagine 44.

Belongs to the acylphosphatase family. In terms of tissue distribution, organ-common type isozyme is found in many different tissues.

The enzyme catalyses an acyl phosphate + H2O = a carboxylate + phosphate + H(+). This is Acylphosphatase-1 (ACYP1) from Bos taurus (Bovine).